The sequence spans 345 residues: Phosphate acyltransferase (345 aa).

It belongs to the PlsX family. In terms of assembly, homodimer. Probably interacts with PlsY.

It is found in the cytoplasm. It carries out the reaction a fatty acyl-[ACP] + phosphate = an acyl phosphate + holo-[ACP]. It participates in lipid metabolism; phospholipid metabolism. Its function is as follows. Catalyzes the reversible formation of acyl-phosphate (acyl-PO(4)) from acyl-[acyl-carrier-protein] (acyl-ACP). This enzyme utilizes acyl-ACP as fatty acyl donor, but not acyl-CoA. This chain is Phosphate acyltransferase, found in Wolbachia pipientis wMel.